A 786-amino-acid polypeptide reads, in one-letter code: Sucrose synthase (786 aa).

Residues 259-736 (MIFSLVVLSP…ALKRVEERYN (478 aa)) form a GT-B glycosyltransferase region.

Belongs to the glycosyltransferase 1 family. Homotetramer.

It carries out the reaction an NDP-alpha-D-glucose + D-fructose = a ribonucleoside 5'-diphosphate + sucrose + H(+). Its function is as follows. Catalyzes the reversible conversion of sucrose and a nucleotide disphosphate (NDP) into fructose and NDP-glucose; although the reaction is freely reversible in vitro, the physiological reaction seems to be sucrose cleavage. Unlike characterized plant enzymes prefers ADP as a cosubstrate, whereas plants prefer UDP. Its preference for ADP over UDP suggests it may directly link sucrose and glycogen metabolism. The chain is Sucrose synthase from Denitrovibrio acetiphilus (strain DSM 12809 / NBRC 114555 / N2460).